The chain runs to 498 residues: Lysine--tRNA ligase (498 aa).

E408 and E415 together coordinate Mg(2+).

This sequence belongs to the class-II aminoacyl-tRNA synthetase family. As to quaternary structure, homodimer. Mg(2+) serves as cofactor.

Its subcellular location is the cytoplasm. The catalysed reaction is tRNA(Lys) + L-lysine + ATP = L-lysyl-tRNA(Lys) + AMP + diphosphate. This is Lysine--tRNA ligase from Listeria welshimeri serovar 6b (strain ATCC 35897 / DSM 20650 / CCUG 15529 / CIP 8149 / NCTC 11857 / SLCC 5334 / V8).